The chain runs to 507 residues: Maturase K (507 aa).

The protein belongs to the intron maturase 2 family. MatK subfamily.

It is found in the plastid. The protein localises to the chloroplast. Usually encoded in the trnK tRNA gene intron. Probably assists in splicing its own and other chloroplast group II introns. The sequence is that of Maturase K from Annona muricata (Soursop).